The chain runs to 97 residues: Zinc metalloproteinase-disintegrin-like bothrojarin-4 (97 aa).

Residues 4 to 90 form the Disintegrin domain; sequence PPVCGNYFVE…DCPTDRFRRN (87 aa). Residues V6, N9, F11, E13, E16, and D19 each coordinate Ca(2+). 7 disulfides stabilise this stretch: C7–C36, C18–C31, C20–C26, C30–C53, C44–C50, C49–C75, and C62–C82. A glycan (N-linked (GlcNAc...) asparagine) is linked at N32. The D/ECD-tripeptide; atypical (KCD) motif lies at 68-70; sequence KCD.

The protein belongs to the venom metalloproteinase (M12B) family. P-III subfamily. P-IIIa sub-subfamily. In terms of assembly, monomer. The cofactor is Zn(2+). In terms of tissue distribution, expressed by the venom gland.

The protein resides in the secreted. The hemorrhagic metalloproteinase-disintegrin-like bothrojarin-1 is a potent inhibitor of collagen-induced platelet aggregation by blockage of alpha-2/beta-1 (ITGA2/ITGB1) integrin. It does not present any fibrinogen-clotting activity. This Bothrops jararaca (Jararaca) protein is Zinc metalloproteinase-disintegrin-like bothrojarin-4.